Reading from the N-terminus, the 1150-residue chain is C5a peptidase (1150 aa).

Residues 1–31 form the signal peptide; sequence MRKKQKLPFDKLAIALMSTSILLNAQSDIKA. The tract at residues 33–73 is disordered; sequence TVTEDTPAAEQAVETPQPTAVSEEVPSSKETKTPQTPDNAE. One can recognise a Peptidase S8 domain in the interval 99-581; that stretch reads KATIRDLNDP…AGAVDAKKAS (483 aa). Active-site charge relay system residues include aspartate 130, histidine 193, and serine 512. 2 stretches are compositionally biased toward basic and acidic residues: residues 1029–1054 and 1061–1073; these read EGHS…KPEQ and PDKK…EKDS. The tract at residues 1029 to 1116 is disordered; the sequence is EGHSNKPEQD…RDQLPTTNDK (88 aa). 3 tandem repeats follow at residues 1034 to 1050, 1051 to 1067, and 1068 to 1084. A 3 X 17 AA tandem repeats region spans residues 1034–1084; it reads KPEQDGSDQAPDKKPEAKPEQDGSGQTPDKKPETKPEKDSSGQTPGKTPQK. The segment covering 1075 to 1089 has biased composition (polar residues); sequence GQTPGKTPQKGQPSR. Positions 1110-1114 match the LPXTG sorting signal motif; that stretch reads LPTTN. At threonine 1113 the chain carries Pentaglycyl murein peptidoglycan amidated threonine. Positions 1114–1150 are cleaved as a propeptide — removed by sortase; sequence NDKDTNRLHLLKLVMTTFFFGLVAHIFKTKRQKETKK.

Belongs to the peptidase S8 family. Post-translationally, cleaved by SpeB protease; leading to its degradation. Degradation by SpeB is probably strictly regulated to preserve integrity of C5a peptidase.

It is found in the secreted. The protein resides in the cell wall. The catalysed reaction is The primary cleavage site is at 67-His-|-Lys-68 in human C5a with a minor secondary cleavage site at 58-Ala-|-Ser-59.. Its function is as follows. This virulence factor of S.pyogenes specifically cleaves the human serum chemotaxin C5a at '68-Lys-|-Asp-69' bond near its C-terminus, destroying its ability to serve as a chemoattractant. The protein is C5a peptidase (scpA) of Streptococcus pyogenes serotype M18 (strain MGAS8232).